Consider the following 423-residue polypeptide: Serine hydroxymethyltransferase (423 aa).

(6S)-5,6,7,8-tetrahydrofolate contacts are provided by residues leucine 120 and 124–126 (GHL). Lysine 229 bears the N6-(pyridoxal phosphate)lysine mark. Residue 353 to 355 (SPF) participates in (6S)-5,6,7,8-tetrahydrofolate binding.

It belongs to the SHMT family. Homodimer. Requires pyridoxal 5'-phosphate as cofactor.

The protein resides in the cytoplasm. The catalysed reaction is (6R)-5,10-methylene-5,6,7,8-tetrahydrofolate + glycine + H2O = (6S)-5,6,7,8-tetrahydrofolate + L-serine. Its pathway is one-carbon metabolism; tetrahydrofolate interconversion. The protein operates within amino-acid biosynthesis; glycine biosynthesis; glycine from L-serine: step 1/1. In terms of biological role, catalyzes the reversible interconversion of serine and glycine with tetrahydrofolate (THF) serving as the one-carbon carrier. This reaction serves as the major source of one-carbon groups required for the biosynthesis of purines, thymidylate, methionine, and other important biomolecules. Also exhibits THF-independent aldolase activity toward beta-hydroxyamino acids, producing glycine and aldehydes, via a retro-aldol mechanism. This chain is Serine hydroxymethyltransferase, found in Prochlorococcus marinus subsp. pastoris (strain CCMP1986 / NIES-2087 / MED4).